The chain runs to 272 residues: GPN-loop GTPase 3 (272 aa).

GTP is bound at residue 13–18; that stretch reads GAGKST. Positions 70-72 match the Gly-Pro-Asn (GPN)-loop; involved in dimer interface motif; the sequence is GPN. A GTP-binding site is contributed by 173–176; the sequence is SKLD.

The protein belongs to the GPN-loop GTPase family. In terms of assembly, heterodimers with NPA3/GPN1 or GPN2. Binds to RNA polymerase II (RNAPII).

Small GTPase required for proper nuclear localization of RNA polymerase II and III (RNAPII and RNAPIII). May act at an RNAP assembly step prior to nuclear import. Promotes sister chromatid separation during anaphase. The polypeptide is GPN-loop GTPase 3 (Saccharomyces cerevisiae (strain ATCC 204508 / S288c) (Baker's yeast)).